Reading from the N-terminus, the 118-residue chain is MAGRSGDSDEDLLKAVRLIKFLYQSNPPPSPEGTRQARRNRRRRWRARQRQIREIAERILGTYLGRPAEPVPLQLPPLERLNLNCSEDCRTSGTQGVGHPQISVESPTVLESGTEEQC.

Phosphoserine; by host CK2 is present on residues S5 and S8. The tract at residues 18–26 (LIKFLYQSN) is homomultimerization. The disordered stretch occupies residues 23–46 (YQSNPPPSPEGTRQARRNRRRRWR). The Nuclear localization signal and RNA-binding (RRE) signature appears at 34 to 50 (TRQARRNRRRRWRARQR). Positions 36 to 46 (QARRNRRRRWR) are enriched in basic residues. The short motif at 73–84 (LQLPPLERLNLN) is the Nuclear export signal and binding to XPO1 element. Residues 87-118 (EDCRTSGTQGVGHPQISVESPTVLESGTEEQC) are disordered. The residue at position 92 (S92) is a Phosphoserine; by host. The span at 103–112 (SVESPTVLES) shows a compositional bias: polar residues.

This sequence belongs to the HIV-1 REV protein family. In terms of assembly, homomultimer; when bound to the RRE. Multimeric assembly is essential for activity and may involve XPO1. Binds to human KPNB1, XPO1, TNPO1, RANBP5 and IPO7. Interacts with the viral Integrase. Interacts with human KHDRBS1. Interacts with human NAP1; this interaction decreases Rev multimerization and stimulates its activity. Interacts with human DEAD-box helicases DDX3 and DDX24; these interactions may serve for viral RNA export to the cytoplasm and packaging, respectively. Interacts with human PSIP1; this interaction may inhibit HIV-1 DNA integration by promoting dissociation of the Integrase-LEDGF/p75 complex. Post-translationally, asymmetrically arginine dimethylated at one site by host PRMT6. Methylation impairs the RNA-binding activity and export of viral RNA from the nucleus to the cytoplasm. In terms of processing, phosphorylated by protein kinase CK2. Presence of, and maybe binding to the N-terminus of the regulatory beta subunit of CK2 is necessary for CK2-mediated Rev's phosphorylation.

It is found in the host nucleus. The protein resides in the host nucleolus. The protein localises to the host cytoplasm. In terms of biological role, escorts unspliced or incompletely spliced viral pre-mRNAs (late transcripts) out of the nucleus of infected cells. These pre-mRNAs carry a recognition sequence called Rev responsive element (RRE) located in the env gene, that is not present in fully spliced viral mRNAs (early transcripts). This function is essential since most viral proteins are translated from unspliced or partially spliced pre-mRNAs which cannot exit the nucleus by the pathway used by fully processed cellular mRNAs. Rev itself is translated from a fully spliced mRNA that readily exits the nucleus. Rev's nuclear localization signal (NLS) binds directly to KPNB1/Importin beta-1 without previous binding to KPNA1/Importin alpha-1. KPNB1 binds to the GDP bound form of RAN (Ran-GDP) and targets Rev to the nucleus. In the nucleus, the conversion from Ran-GDP to Ran-GTP dissociates Rev from KPNB1 and allows Rev's binding to the RRE in viral pre-mRNAs. Rev multimerization on the RRE via cooperative assembly exposes its nuclear export signal (NES) to the surface. Rev can then form a complex with XPO1/CRM1 and Ran-GTP, leading to nuclear export of the complex. Conversion from Ran-GTP to Ran-GDP mediates dissociation of the Rev/RRE/XPO1/RAN complex, so that Rev can return to the nucleus for a subsequent round of export. Beside KPNB1, also seems to interact with TNPO1/Transportin-1, RANBP5/IPO5 and IPO7/RANBP7 for nuclear import. The nucleoporin-like HRB/RIP is an essential cofactor that probably indirectly interacts with Rev to release HIV RNAs from the perinuclear region to the cytoplasm. In Human immunodeficiency virus type 1 group M subtype D (isolate ELI) (HIV-1), this protein is Protein Rev.